The sequence spans 451 residues: tRNA modification GTPase MnmE (451 aa).

Arginine 28, glutamate 85, and lysine 124 together coordinate (6S)-5-formyl-5,6,7,8-tetrahydrofolate. Residues 220 to 373 (GLYTVLVGPP…LKTRLRTLLL (154 aa)) form the TrmE-type G domain. Asparagine 230 contacts K(+). GTP is bound by residues 230–235 (NVGKSS), 249–255 (TDVPGTT), and 274–277 (DTAG). Serine 234 contributes to the Mg(2+) binding site. K(+)-binding residues include threonine 249, valine 251, and threonine 254. Threonine 255 lines the Mg(2+) pocket. Lysine 451 contributes to the (6S)-5-formyl-5,6,7,8-tetrahydrofolate binding site.

Belongs to the TRAFAC class TrmE-Era-EngA-EngB-Septin-like GTPase superfamily. TrmE GTPase family. Homodimer. Heterotetramer of two MnmE and two MnmG subunits. Requires K(+) as cofactor.

Its subcellular location is the cytoplasm. Its function is as follows. Exhibits a very high intrinsic GTPase hydrolysis rate. Involved in the addition of a carboxymethylaminomethyl (cmnm) group at the wobble position (U34) of certain tRNAs, forming tRNA-cmnm(5)s(2)U34. In Xylella fastidiosa (strain 9a5c), this protein is tRNA modification GTPase MnmE.